Consider the following 411-residue polypeptide: Dihydrosphingosine 1-phosphate phosphatase C823.11 (411 aa).

Topologically, residues 1-74 (MVHKKKNVDI…LDVYFMYTAT (74 aa)) are lumenal. The helical transmembrane segment at 75–95 (LGTHVFFMLALPIFFWSGCIY) threads the bilayer. Topologically, residues 96–99 (YTLD) are cytoplasmic. Residues 100–120 (ITQLFAAGVYFSGCIKDYFCL) form a helical membrane-spanning segment. Positions 115–123 (KDYFCLPRP) are phosphatase sequence motif I. The Lumenal portion of the chain corresponds to 121–170 (PRPRSPPMVRLTLSSDAEYEYGFPSTHTTNAMATGFYSLFLLLSMSDSMS). The segment at 144 to 147 (PSTH) is phosphatase sequence motif II. The active-site Proton donor is His147. A helical membrane pass occupies residues 171-191 (SISYYFLLSLVLLYIASISLG). Positions 191–202 (GRIYCGMHGFMD) are phosphatase sequence motif III. At 192-195 (RIYC) the chain is on the cytoplasmic side. The helical transmembrane segment at 196–216 (GMHGFMDVSTGTILGVTLAIF) threads the bilayer. His198 (nucleophile) is an active-site residue. The Lumenal segment spans residues 217–233 (QWKYADFFHNVWSSSST). The helical transmembrane segment at 234 to 254 (SVPILSVVLALFFIWFHPQPA) threads the bilayer. The Cytoplasmic portion of the chain corresponds to 255 to 259 (ERCIC). A helical transmembrane segment spans residues 260–280 (LEDSISFISVIMGIDLGTWFA). The Lumenal portion of the chain corresponds to 281–293 (SPESLSHLHDNLN). Residues 294–314 (SYFLLKFFVRVLFGVCMILIW) traverse the membrane as a helical segment. The Cytoplasmic portion of the chain corresponds to 315–387 (KSFAKQALLA…VRFDIETIAR (73 aa)). The chain crosses the membrane as a helical span at residues 388 to 408 (IIVYSGIGFLCTYFAPKVFLK). The Lumenal portion of the chain corresponds to 409 to 411 (WKI).

It belongs to the type 2 lipid phosphate phosphatase family.

The protein localises to the endoplasmic reticulum membrane. Functionally, dihydrosphingosine 1-phosphate phosphatase required for efficient ceramide synthesis from exogenous sphingoid bases. Involved in endocytosis and calcium-mediated signaling. The chain is Dihydrosphingosine 1-phosphate phosphatase C823.11 from Schizosaccharomyces pombe (strain 972 / ATCC 24843) (Fission yeast).